The following is a 264-amino-acid chain: tRNA pseudouridine synthase A (264 aa).

Catalysis depends on Asp-51, which acts as the Nucleophile. Tyr-109 serves as a coordination point for substrate.

It belongs to the tRNA pseudouridine synthase TruA family. In terms of assembly, homodimer.

It catalyses the reaction uridine(38/39/40) in tRNA = pseudouridine(38/39/40) in tRNA. Formation of pseudouridine at positions 38, 39 and 40 in the anticodon stem and loop of transfer RNAs. This is tRNA pseudouridine synthase A from Vibrio parahaemolyticus serotype O3:K6 (strain RIMD 2210633).